We begin with the raw amino-acid sequence, 374 residues long: Queuine tRNA-ribosyltransferase (374 aa).

Residue D89 is the Proton acceptor of the active site. Residues 89–93 (DSGGF), D143, Q187, and G214 each bind substrate. Residues 245-251 (GVGKPED) are RNA binding. D264 (nucleophile) is an active-site residue. The segment at 269–273 (TRNAR) is RNA binding; important for wobble base 34 recognition. Residues C302, C304, C307, and H333 each coordinate Zn(2+).

It belongs to the queuine tRNA-ribosyltransferase family. In terms of assembly, homodimer. Within each dimer, one monomer is responsible for RNA recognition and catalysis, while the other monomer binds to the replacement base PreQ1. Zn(2+) serves as cofactor.

It catalyses the reaction 7-aminomethyl-7-carbaguanine + guanosine(34) in tRNA = 7-aminomethyl-7-carbaguanosine(34) in tRNA + guanine. It functions in the pathway tRNA modification; tRNA-queuosine biosynthesis. Functionally, catalyzes the base-exchange of a guanine (G) residue with the queuine precursor 7-aminomethyl-7-deazaguanine (PreQ1) at position 34 (anticodon wobble position) in tRNAs with GU(N) anticodons (tRNA-Asp, -Asn, -His and -Tyr). Catalysis occurs through a double-displacement mechanism. The nucleophile active site attacks the C1' of nucleotide 34 to detach the guanine base from the RNA, forming a covalent enzyme-RNA intermediate. The proton acceptor active site deprotonates the incoming PreQ1, allowing a nucleophilic attack on the C1' of the ribose to form the product. After dissociation, two additional enzymatic reactions on the tRNA convert PreQ1 to queuine (Q), resulting in the hypermodified nucleoside queuosine (7-(((4,5-cis-dihydroxy-2-cyclopenten-1-yl)amino)methyl)-7-deazaguanosine). This chain is Queuine tRNA-ribosyltransferase, found in Photorhabdus laumondii subsp. laumondii (strain DSM 15139 / CIP 105565 / TT01) (Photorhabdus luminescens subsp. laumondii).